The following is a 244-amino-acid chain: tRNA (guanine-N(1)-)-methyltransferase (244 aa).

S-adenosyl-L-methionine contacts are provided by residues Gly111 and 130–135 (IGDYVL).

Belongs to the RNA methyltransferase TrmD family. In terms of assembly, homodimer.

It localises to the cytoplasm. It catalyses the reaction guanosine(37) in tRNA + S-adenosyl-L-methionine = N(1)-methylguanosine(37) in tRNA + S-adenosyl-L-homocysteine + H(+). In terms of biological role, specifically methylates guanosine-37 in various tRNAs. In Phytoplasma australiense, this protein is tRNA (guanine-N(1)-)-methyltransferase.